The chain runs to 237 residues: B3 domain-containing protein Os03g0184500 (237 aa).

A DNA-binding region (TF-B3) is located at residues 137–228 (FVKPMLHSHV…TFKVHIIRAT (92 aa)).

It localises to the nucleus. This Oryza sativa subsp. japonica (Rice) protein is B3 domain-containing protein Os03g0184500.